An 870-amino-acid polypeptide reads, in one-letter code: UvrABC system protein B (870 aa).

Residues 20-410 (EGVDNNDRTQ…VFAEQVIRPT (391 aa)) form the Helicase ATP-binding domain. 33–40 (GVTGSGKT) is an ATP binding site. Residues 86–109 (YYDYYQPEAYVPRTDTFIEKESSI) carry the Beta-hairpin motif. In terms of domain architecture, Helicase C-terminal spans 425-591 (QVDDVVGEIR…SVKSRISDIL (167 aa)). A UVR domain is found at 620–655 (KAHLDAMEKQMRDAAANLDFEKAARIRDEIKRLREM). Disordered regions lie at residues 671-698 (ESPV…QERF) and 741-870 (AKPS…RPGK). The segment covering 679 to 689 (KGKHNKGVAKH) has biased composition (basic residues). 2 stretches are compositionally biased toward basic and acidic residues: residues 793–808 (NSLD…KPVE) and 827–836 (TDVKDRDDSA). Over residues 858 to 870 (EKRRPGKTGRPGK) the composition is skewed to basic residues.

Belongs to the UvrB family. As to quaternary structure, forms a heterotetramer with UvrA during the search for lesions. Interacts with UvrC in an incision complex.

The protein resides in the cytoplasm. Its function is as follows. The UvrABC repair system catalyzes the recognition and processing of DNA lesions. A damage recognition complex composed of 2 UvrA and 2 UvrB subunits scans DNA for abnormalities. Upon binding of the UvrA(2)B(2) complex to a putative damaged site, the DNA wraps around one UvrB monomer. DNA wrap is dependent on ATP binding by UvrB and probably causes local melting of the DNA helix, facilitating insertion of UvrB beta-hairpin between the DNA strands. Then UvrB probes one DNA strand for the presence of a lesion. If a lesion is found the UvrA subunits dissociate and the UvrB-DNA preincision complex is formed. This complex is subsequently bound by UvrC and the second UvrB is released. If no lesion is found, the DNA wraps around the other UvrB subunit that will check the other stand for damage. The polypeptide is UvrABC system protein B (Mesorhizobium japonicum (strain LMG 29417 / CECT 9101 / MAFF 303099) (Mesorhizobium loti (strain MAFF 303099))).